The chain runs to 360 residues: Phosphate acyltransferase (360 aa).

Belongs to the PlsX family. Homodimer. Probably interacts with PlsY.

It is found in the cytoplasm. The catalysed reaction is a fatty acyl-[ACP] + phosphate = an acyl phosphate + holo-[ACP]. The protein operates within lipid metabolism; phospholipid metabolism. Its function is as follows. Catalyzes the reversible formation of acyl-phosphate (acyl-PO(4)) from acyl-[acyl-carrier-protein] (acyl-ACP). This enzyme utilizes acyl-ACP as fatty acyl donor, but not acyl-CoA. This is Phosphate acyltransferase from Caulobacter vibrioides (strain ATCC 19089 / CIP 103742 / CB 15) (Caulobacter crescentus).